The chain runs to 297 residues: PDZ domain-containing protein GIPC3 (297 aa).

The PDZ domain maps to 97-177 (EVEVTKTEDA…SQPFTLRLVQ (81 aa)).

This sequence belongs to the GIPC family. As to expression, expressed in adult lung, brain and testis. In the inner ear, it is expressed in the inner and outer hair cells of the organ of Corti. Also expressed in cochlear spiral ganglion neurons.

Its function is as follows. Required for postnatal maturation of the hair bundle and long-term survival of hair cells and spiral ganglion. The chain is PDZ domain-containing protein GIPC3 (Gipc3) from Mus musculus (Mouse).